A 494-amino-acid polypeptide reads, in one-letter code: Probable cytosol aminopeptidase (494 aa).

Mn(2+) contacts are provided by Lys260 and Asp265. Lys272 is an active-site residue. Asp283, Asp342, and Glu344 together coordinate Mn(2+). Arg346 is an active-site residue.

It belongs to the peptidase M17 family. Mn(2+) serves as cofactor.

It localises to the cytoplasm. It carries out the reaction Release of an N-terminal amino acid, Xaa-|-Yaa-, in which Xaa is preferably Leu, but may be other amino acids including Pro although not Arg or Lys, and Yaa may be Pro. Amino acid amides and methyl esters are also readily hydrolyzed, but rates on arylamides are exceedingly low.. The catalysed reaction is Release of an N-terminal amino acid, preferentially leucine, but not glutamic or aspartic acids.. Functionally, presumably involved in the processing and regular turnover of intracellular proteins. Catalyzes the removal of unsubstituted N-terminal amino acids from various peptides. The polypeptide is Probable cytosol aminopeptidase (Bacillus thuringiensis subsp. konkukian (strain 97-27)).